A 293-amino-acid chain; its full sequence is ATP synthase gamma chain (293 aa).

The protein belongs to the ATPase gamma chain family. As to quaternary structure, F-type ATPases have 2 components, CF(1) - the catalytic core - and CF(0) - the membrane proton channel. CF(1) has five subunits: alpha(3), beta(3), gamma(1), delta(1), epsilon(1). CF(0) has three main subunits: a, b and c.

It is found in the cell inner membrane. In terms of biological role, produces ATP from ADP in the presence of a proton gradient across the membrane. The gamma chain is believed to be important in regulating ATPase activity and the flow of protons through the CF(0) complex. The protein is ATP synthase gamma chain of Psychrobacter arcticus (strain DSM 17307 / VKM B-2377 / 273-4).